We begin with the raw amino-acid sequence, 338 residues long: O-methyltransferase 4 (338 aa).

Residues Gly-184, Asp-207, Asn-230, Phe-231, Lys-244, and Arg-245 each coordinate S-adenosyl-L-methionine. Residue His-248 is the Proton acceptor of the active site.

This sequence belongs to the class I-like SAM-binding methyltransferase superfamily. Cation-independent O-methyltransferase family. COMT subfamily.

It catalyses the reaction (3,5-dichloro-2,4,6-trihydroxyphenyl)hexan-1-one + S-adenosyl-L-methionine = 1-(3,5-dichloro-2,6-dihydroxy-4-methoxyphenyl)hexan-1-one + S-adenosyl-L-homocysteine + H(+). This Dictyostelium discoideum (Social amoeba) protein is O-methyltransferase 4 (omt4).